We begin with the raw amino-acid sequence, 637 residues long: Chaperone protein dnaK2 (637 aa).

Residue threonine 197 is modified to Phosphothreonine; by autocatalysis. Residues alanine 602–lysine 637 are disordered. Residues alanine 603–aspartate 623 are compositionally biased toward gly residues. The span at alanine 624–lysine 637 shows a compositional bias: acidic residues.

This sequence belongs to the heat shock protein 70 family.

Functionally, acts as a chaperone. The polypeptide is Chaperone protein dnaK2 (dnaK2) (Parasynechococcus marenigrum (strain WH8102)).